Here is a 464-residue protein sequence, read N- to C-terminus: tRNA modification GTPase MnmE (464 aa).

Positions 25, 87, and 130 each coordinate (6S)-5-formyl-5,6,7,8-tetrahydrofolate. Positions 226–386 (GLSVVLAGQP…LRAELLRIAG (161 aa)) constitute a TrmE-type G domain. Residue asparagine 236 participates in K(+) binding. GTP contacts are provided by residues 236 to 241 (NVGKSS), 255 to 261 (TPIAGTT), and 280 to 283 (DTAG). Serine 240 lines the Mg(2+) pocket. Threonine 255, isoleucine 257, and threonine 260 together coordinate K(+). Mg(2+) is bound at residue threonine 261. Lysine 464 contacts (6S)-5-formyl-5,6,7,8-tetrahydrofolate.

This sequence belongs to the TRAFAC class TrmE-Era-EngA-EngB-Septin-like GTPase superfamily. TrmE GTPase family. Homodimer. Heterotetramer of two MnmE and two MnmG subunits. K(+) is required as a cofactor.

The protein localises to the cytoplasm. In terms of biological role, exhibits a very high intrinsic GTPase hydrolysis rate. Involved in the addition of a carboxymethylaminomethyl (cmnm) group at the wobble position (U34) of certain tRNAs, forming tRNA-cmnm(5)s(2)U34. The protein is tRNA modification GTPase MnmE of Burkholderia lata (strain ATCC 17760 / DSM 23089 / LMG 22485 / NCIMB 9086 / R18194 / 383).